Here is a 91-residue protein sequence, read N- to C-terminus: Small ribosomal subunit protein uS19 (91 aa).

It belongs to the universal ribosomal protein uS19 family.

In terms of biological role, protein S19 forms a complex with S13 that binds strongly to the 16S ribosomal RNA. The chain is Small ribosomal subunit protein uS19 from Prochlorococcus marinus (strain NATL1A).